A 195-amino-acid polypeptide reads, in one-letter code: Transcriptional regulator GfcR (195 aa).

It belongs to the purine/pyrimidine phosphoribosyltransferase family. GfcR subfamily.

This Archaeoglobus fulgidus (strain ATCC 49558 / DSM 4304 / JCM 9628 / NBRC 100126 / VC-16) protein is Transcriptional regulator GfcR.